A 334-amino-acid polypeptide reads, in one-letter code: Nucleoid-associated protein Pfl01_0983 (334 aa).

This sequence belongs to the YejK family.

The protein localises to the cytoplasm. It localises to the nucleoid. The chain is Nucleoid-associated protein Pfl01_0983 from Pseudomonas fluorescens (strain Pf0-1).